The chain runs to 379 residues: Queuine tRNA-ribosyltransferase (379 aa).

Catalysis depends on D94, which acts as the Proton acceptor. Residues 94–98 (DSGGF), D148, Q191, and G218 contribute to the substrate site. Residues 249-255 (GVGSPDS) are RNA binding. Residue D268 is the Nucleophile of the active site. The interval 273–277 (TRIAR) is RNA binding; important for wobble base 34 recognition. Positions 306, 308, 311, and 337 each coordinate Zn(2+).

The protein belongs to the queuine tRNA-ribosyltransferase family. As to quaternary structure, homodimer. Within each dimer, one monomer is responsible for RNA recognition and catalysis, while the other monomer binds to the replacement base PreQ1. The cofactor is Zn(2+).

The catalysed reaction is 7-aminomethyl-7-carbaguanine + guanosine(34) in tRNA = 7-aminomethyl-7-carbaguanosine(34) in tRNA + guanine. It participates in tRNA modification; tRNA-queuosine biosynthesis. Functionally, catalyzes the base-exchange of a guanine (G) residue with the queuine precursor 7-aminomethyl-7-deazaguanine (PreQ1) at position 34 (anticodon wobble position) in tRNAs with GU(N) anticodons (tRNA-Asp, -Asn, -His and -Tyr). Catalysis occurs through a double-displacement mechanism. The nucleophile active site attacks the C1' of nucleotide 34 to detach the guanine base from the RNA, forming a covalent enzyme-RNA intermediate. The proton acceptor active site deprotonates the incoming PreQ1, allowing a nucleophilic attack on the C1' of the ribose to form the product. After dissociation, two additional enzymatic reactions on the tRNA convert PreQ1 to queuine (Q), resulting in the hypermodified nucleoside queuosine (7-(((4,5-cis-dihydroxy-2-cyclopenten-1-yl)amino)methyl)-7-deazaguanosine). This chain is Queuine tRNA-ribosyltransferase, found in Bacillus cytotoxicus (strain DSM 22905 / CIP 110041 / 391-98 / NVH 391-98).